The primary structure comprises 199 residues: NAD(P)H dehydrogenase (quinone) (199 aa).

Residues 4–190 enclose the Flavodoxin-like domain; that stretch reads VLVLYYSAYG…AGARYQGRVI (187 aa). FMN-binding positions include 10–15 and 78–80; these read SAYGHI and TRF. An NAD(+)-binding site is contributed by Tyr12. Trp98 lines the substrate pocket. FMN-binding positions include 113 to 119 and His134; that span reads STATQHG.

Belongs to the WrbA family. Requires FMN as cofactor.

The enzyme catalyses a quinone + NADH + H(+) = a quinol + NAD(+). The catalysed reaction is a quinone + NADPH + H(+) = a quinol + NADP(+). This is NAD(P)H dehydrogenase (quinone) from Bradyrhizobium sp. (strain BTAi1 / ATCC BAA-1182).